Reading from the N-terminus, the 188-residue chain is Elongation factor P (188 aa).

The residue at position 34 (Lys34) is an N6-(3,6-diaminohexanoyl)-5-hydroxylysine.

Belongs to the elongation factor P family. May be beta-lysylated on the epsilon-amino group of Lys-34 by the combined action of EpmA and EpmB, and then hydroxylated on the C5 position of the same residue by EpmC (if this protein is present). Lysylation is critical for the stimulatory effect of EF-P on peptide-bond formation. The lysylation moiety may extend toward the peptidyltransferase center and stabilize the terminal 3-CCA end of the tRNA. Hydroxylation of the C5 position on Lys-34 may allow additional potential stabilizing hydrogen-bond interactions with the P-tRNA.

The protein localises to the cytoplasm. Its pathway is protein biosynthesis; polypeptide chain elongation. Involved in peptide bond synthesis. Alleviates ribosome stalling that occurs when 3 or more consecutive Pro residues or the sequence PPG is present in a protein, possibly by augmenting the peptidyl transferase activity of the ribosome. Modification of Lys-34 is required for alleviation. This is Elongation factor P from Haemophilus influenzae (strain 86-028NP).